The primary structure comprises 191 residues: UPF0149 protein VV2847 (191 aa).

The protein belongs to the UPF0149 family.

In Vibrio vulnificus (strain YJ016), this protein is UPF0149 protein VV2847.